Consider the following 528-residue polypeptide: Drimenol cyclase drtB (528 aa).

Belongs to the HAD-like hydrolase superfamily.

The enzyme catalyses (2E,6E)-farnesyl diphosphate + H2O = (5S,9S,10S)-drim-7-en-11-ol + diphosphate. It participates in secondary metabolite biosynthesis; terpenoid biosynthesis. In terms of biological role, drimenol cyclase; part of the gene cluster that mediates the biosynthesis of various drimane-type sesquiterpene esters, compounds that exhibit diverse biological activities and are widely present in eukaryotes. The pathway begins with the synthesis of the backbone drimenol by the terpene cyclase drtB using farnesyl pyrophosphate (FPP) as substrate. The cytochrome P450 monooxygenase drtD is then responsible for the hydroxylations at C-6, C-9 and C-12, as well as the oxidation of hydroxyl groups at C-6 and C-11 to a ketone and an aldehyde, respectively. Then, the biosynthesis can go in two directions, either the hydroxylated drimenol is further hydroxylated at C-2 and C-3 by an enzyme(s) not associated with the drt cluster, or the FAD-binding oxidoreductase drtC further oxidizes C-11 or C-12 to form the butyrolactone ring. DrtB, drtD and drtC are solely responsible for the formation of the different drimane structures observed during drimane sesquiterpenes biosynthesis. The polyketide synthase drtA synthesizes different lengths (C6 and C8) of PKS chains, which are then oxidized to varying degrees by the short-chain dehydrogenase drtF. Finally, these PKS chains are transferred onto drimane sesquiterpenes by the acyltransferase drtE, forming the sesquiterpene esters. In addition to the different fatty acyl-CoA chains produced by drtA, drtE is also able to use cinnamoyl-CoA as a substrate. This chain is Drimenol cyclase drtB, found in Aspergillus calidoustus.